A 710-amino-acid polypeptide reads, in one-letter code: Integrator complex subunit 10 (710 aa).

A phosphoserine mark is found at serine 231, serine 381, and serine 382. Lysine 464 is covalently cross-linked (Glycyl lysine isopeptide (Lys-Gly) (interchain with G-Cter in SUMO2)).

Belongs to the Integrator subunit 10 family. As to quaternary structure, component of the Integrator complex, composed of core subunits INTS1, INTS2, INTS3, INTS4, INTS5, INTS6, INTS7, INTS8, INTS9/RC74, INTS10, INTS11/CPSF3L, INTS12, INTS13, INTS14 and INTS15. The core complex associates with protein phosphatase 2A subunits PPP2CA and PPP2R1A, to form the Integrator-PP2A (INTAC) complex. INTS10 is part of the tail subcomplex, composed of INTS10, INTS13, INTS14 and INTS15.

The protein resides in the nucleus. Its function is as follows. Component of the integrator complex, a multiprotein complex that terminates RNA polymerase II (Pol II) transcription in the promoter-proximal region of genes. The integrator complex provides a quality checkpoint during transcription elongation by driving premature transcription termination of transcripts that are unfavorably configured for transcriptional elongation: the complex terminates transcription by (1) catalyzing dephosphorylation of the C-terminal domain (CTD) of Pol II subunit POLR2A/RPB1 and SUPT5H/SPT5, (2) degrading the exiting nascent RNA transcript via endonuclease activity and (3) promoting the release of Pol II from bound DNA. The integrator complex is also involved in terminating the synthesis of non-coding Pol II transcripts, such as enhancer RNAs (eRNAs), small nuclear RNAs (snRNAs), telomerase RNAs and long non-coding RNAs (lncRNAs). Within the integrator complex, INTS10 is part of the integrator tail module that acts as a platform for the recruitment of transcription factors at promoters. May be not involved in the recruitment of cytoplasmic dynein to the nuclear envelope, probably as component of the integrator complex. In Mus musculus (Mouse), this protein is Integrator complex subunit 10 (Ints10).